Here is a 133-residue protein sequence, read N- to C-terminus: Small ribosomal subunit protein uS8 (133 aa).

It belongs to the universal ribosomal protein uS8 family. As to quaternary structure, part of the 30S ribosomal subunit. Contacts proteins S5 and S12.

Functionally, one of the primary rRNA binding proteins, it binds directly to 16S rRNA central domain where it helps coordinate assembly of the platform of the 30S subunit. The polypeptide is Small ribosomal subunit protein uS8 (Deinococcus deserti (strain DSM 17065 / CIP 109153 / LMG 22923 / VCD115)).